A 274-amino-acid chain; its full sequence is tRNA pseudouridine synthase A (274 aa).

Catalysis depends on D52, which acts as the Nucleophile. Y110 provides a ligand contact to substrate.

Belongs to the tRNA pseudouridine synthase TruA family. In terms of assembly, homodimer.

It catalyses the reaction uridine(38/39/40) in tRNA = pseudouridine(38/39/40) in tRNA. Functionally, formation of pseudouridine at positions 38, 39 and 40 in the anticodon stem and loop of transfer RNAs. The chain is tRNA pseudouridine synthase A from Ralstonia nicotianae (strain ATCC BAA-1114 / GMI1000) (Ralstonia solanacearum).